The primary structure comprises 141 residues: Phosphoribosyl-AMP cyclohydrolase (141 aa).

A Mg(2+)-binding site is contributed by D88. A Zn(2+)-binding site is contributed by C89. D90 and D92 together coordinate Mg(2+). C109 and C116 together coordinate Zn(2+).

The protein belongs to the PRA-CH family. As to quaternary structure, homodimer. The cofactor is Mg(2+). Requires Zn(2+) as cofactor.

It localises to the cytoplasm. It carries out the reaction 1-(5-phospho-beta-D-ribosyl)-5'-AMP + H2O = 1-(5-phospho-beta-D-ribosyl)-5-[(5-phospho-beta-D-ribosylamino)methylideneamino]imidazole-4-carboxamide. It functions in the pathway amino-acid biosynthesis; L-histidine biosynthesis; L-histidine from 5-phospho-alpha-D-ribose 1-diphosphate: step 3/9. Functionally, catalyzes the hydrolysis of the adenine ring of phosphoribosyl-AMP. This Paracidovorax citrulli (strain AAC00-1) (Acidovorax citrulli) protein is Phosphoribosyl-AMP cyclohydrolase.